The primary structure comprises 381 residues: MKVDYYEILGVTRECDDKKLKSAFRKLAMQYHPDRNAGDKEAERKFKEIGEAYEVLKDPQKRAAYDRFGHAAFENNNNGGGSPFSGFSAGGFADIFEDFFGEIMGGGHRKRSDGRERGADLSYNMEVTLEEAFSGKTAQINIPSSVVCDACEGSGAKKGSKPQTCGTCHGAGRVRAAQGFFSIERTCPVCHGRGETIKDPCPKCQGTRRVEKNRSLSVNIPAGIEDSTRIRLSGEGDAGIRGGPSGDLYIFLSVKPHEFFQREGADLHCRVPISMVTAALGGEFEVSDLDGIKARVKIPEGTQNGRQFRLKGKGMPMLRRQQVRGDLYIHITIETPQKLTQEQRELLQKFEKLSNHENSPQSHGFFSRMKEFFENISGKNE.

One can recognise a J domain in the interval 4-69 (DYYEILGVTR…QKRAAYDRFG (66 aa)). Residues 135–213 (GKTAQINIPS…CQGTRRVEKN (79 aa)) form a CR-type zinc finger. Cysteine 148, cysteine 151, cysteine 165, cysteine 168, cysteine 187, cysteine 190, cysteine 201, and cysteine 204 together coordinate Zn(2+). CXXCXGXG motif repeat units lie at residues 148–155 (CDACEGSG), 165–172 (CGTCHGAG), 187–194 (CPVCHGRG), and 201–208 (CPKCQGTR).

It belongs to the DnaJ family. In terms of assembly, homodimer. Zn(2+) serves as cofactor.

It is found in the cytoplasm. In terms of biological role, participates actively in the response to hyperosmotic and heat shock by preventing the aggregation of stress-denatured proteins and by disaggregating proteins, also in an autonomous, DnaK-independent fashion. Unfolded proteins bind initially to DnaJ; upon interaction with the DnaJ-bound protein, DnaK hydrolyzes its bound ATP, resulting in the formation of a stable complex. GrpE releases ADP from DnaK; ATP binding to DnaK triggers the release of the substrate protein, thus completing the reaction cycle. Several rounds of ATP-dependent interactions between DnaJ, DnaK and GrpE are required for fully efficient folding. Also involved, together with DnaK and GrpE, in the DNA replication of plasmids through activation of initiation proteins. In Bartonella henselae (strain ATCC 49882 / DSM 28221 / CCUG 30454 / Houston 1) (Rochalimaea henselae), this protein is Chaperone protein DnaJ.